The following is a 360-amino-acid chain: Phosphoserine aminotransferase (360 aa).

Arg41 is an L-glutamate binding site. Residues Trp101, Thr152, Asp172, and Gln195 each contribute to the pyridoxal 5'-phosphate site. Position 196 is an N6-(pyridoxal phosphate)lysine (Lys196). Position 237-238 (237-238 (NT)) interacts with pyridoxal 5'-phosphate.

Belongs to the class-V pyridoxal-phosphate-dependent aminotransferase family. SerC subfamily. In terms of assembly, homodimer. Pyridoxal 5'-phosphate serves as cofactor.

It localises to the cytoplasm. The catalysed reaction is O-phospho-L-serine + 2-oxoglutarate = 3-phosphooxypyruvate + L-glutamate. It catalyses the reaction 4-(phosphooxy)-L-threonine + 2-oxoglutarate = (R)-3-hydroxy-2-oxo-4-phosphooxybutanoate + L-glutamate. It functions in the pathway amino-acid biosynthesis; L-serine biosynthesis; L-serine from 3-phospho-D-glycerate: step 2/3. It participates in cofactor biosynthesis; pyridoxine 5'-phosphate biosynthesis; pyridoxine 5'-phosphate from D-erythrose 4-phosphate: step 3/5. In terms of biological role, catalyzes the reversible conversion of 3-phosphohydroxypyruvate to phosphoserine and of 3-hydroxy-2-oxo-4-phosphonooxybutanoate to phosphohydroxythreonine. The sequence is that of Phosphoserine aminotransferase from Paraburkholderia phymatum (strain DSM 17167 / CIP 108236 / LMG 21445 / STM815) (Burkholderia phymatum).